Here is a 265-residue protein sequence, read N- to C-terminus: Glutamate racemase (265 aa).

Residues 12–13 (DS) and 44–45 (YG) contribute to the substrate site. Cys75 (proton donor/acceptor) is an active-site residue. 76 to 77 (NT) is a binding site for substrate. The active-site Proton donor/acceptor is Cys186. 187–188 (TH) lines the substrate pocket.

It belongs to the aspartate/glutamate racemases family.

It carries out the reaction L-glutamate = D-glutamate. The protein operates within cell wall biogenesis; peptidoglycan biosynthesis. Provides the (R)-glutamate required for cell wall biosynthesis. The chain is Glutamate racemase from Pseudomonas putida (strain GB-1).